The chain runs to 339 residues: Anthranilate phosphoribosyltransferase (339 aa).

Residues Gly79, Gly82–Asp83, Thr87, Asn89–Thr92, Lys107–Ser115, and Ser119 each bind 5-phospho-alpha-D-ribose 1-diphosphate. Gly79 lines the anthranilate pocket. Ser91 is a Mg(2+) binding site. Residue Asn110 participates in anthranilate binding. Position 165 (Arg165) interacts with anthranilate. The Mg(2+) site is built by Asp224 and Glu225.

This sequence belongs to the anthranilate phosphoribosyltransferase family. Homodimer. It depends on Mg(2+) as a cofactor.

It carries out the reaction N-(5-phospho-beta-D-ribosyl)anthranilate + diphosphate = 5-phospho-alpha-D-ribose 1-diphosphate + anthranilate. Its pathway is amino-acid biosynthesis; L-tryptophan biosynthesis; L-tryptophan from chorismate: step 2/5. Catalyzes the transfer of the phosphoribosyl group of 5-phosphorylribose-1-pyrophosphate (PRPP) to anthranilate to yield N-(5'-phosphoribosyl)-anthranilate (PRA). This chain is Anthranilate phosphoribosyltransferase, found in Caldivirga maquilingensis (strain ATCC 700844 / DSM 13496 / JCM 10307 / IC-167).